We begin with the raw amino-acid sequence, 270 residues long: Tryptophan synthase alpha chain (270 aa).

Active-site proton acceptor residues include Glu-49 and Asp-60.

Belongs to the TrpA family. As to quaternary structure, tetramer of two alpha and two beta chains.

It carries out the reaction (1S,2R)-1-C-(indol-3-yl)glycerol 3-phosphate + L-serine = D-glyceraldehyde 3-phosphate + L-tryptophan + H2O. Its pathway is amino-acid biosynthesis; L-tryptophan biosynthesis; L-tryptophan from chorismate: step 5/5. Its function is as follows. The alpha subunit is responsible for the aldol cleavage of indoleglycerol phosphate to indole and glyceraldehyde 3-phosphate. The protein is Tryptophan synthase alpha chain of Gluconobacter oxydans (strain 621H) (Gluconobacter suboxydans).